A 698-amino-acid chain; its full sequence is 4-hydroxybutyrate--CoA ligase [ADP-forming] (698 aa).

Positions 491–544 (QEVLKAYGLPLPKSTLAKNEAEAVKAAKKIGYPVVMKIASPQIIHKSDAGGVKV) constitute an ATP-grasp domain. An ATP-binding site is contributed by 517–544 (AKKIGYPVVMKIASPQIIHKSDAGGVKV).

The protein in the N-terminal section; belongs to the acetate CoA ligase alpha subunit family. This sequence in the C-terminal section; belongs to the acetate CoA ligase beta subunit family. It depends on Mg(2+) as a cofactor. The cofactor is Mn(2+).

The enzyme catalyses 4-hydroxybutanoate + ATP + CoA = 4-hydroxybutanoyl-CoA + ADP + phosphate. In terms of biological role, involved in thaumarchaeal hydroxypropionate/hydroxybutyrate (HP/HB) cycle, a modified version of the autotrophic HP/HB cycle of Crenarchaeota. Catalyzes the formation of 4-hydroxybutyryl-CoA, ADP and phosphate from 4-hydroxybutyrate, coenzyme A (CoA) and ATP. Can also use acetate, propionate and butyrate, with poor catalytic efficiency. The chain is 4-hydroxybutyrate--CoA ligase [ADP-forming] from Nitrosopumilus maritimus (strain SCM1).